A 162-amino-acid polypeptide reads, in one-letter code: Calcium-binding protein 4b (162 aa).

4 EF-hand domains span residues 10 to 45 (ELTN…CKYP), 46 to 81 (NPTL…DYII), 85 to 120 (TCLK…SGSN), and 123 to 158 (QAKV…YFEI). Ca(2+) is bound by residues aspartate 23, asparagine 25, aspartate 27, glutamine 29, glutamate 34, aspartate 59, aspartate 61, aspartate 63, lysine 65, and glutamate 70. Residues aspartate 136, aspartate 138, aspartate 140, cysteine 142, and glutamate 147 each contribute to the Ca(2+) site.

The polypeptide is Calcium-binding protein 4b (cbpD2) (Dictyostelium discoideum (Social amoeba)).